A 118-amino-acid chain; its full sequence is DNA-binding protein MmarC6_0793 (118 aa).

Positions 1–12 (MNPEEIRQRRLQ) are enriched in basic and acidic residues. Residues 1-33 (MNPEEIRQRRLQEMQAKAQEQGAQDPEAQRQMQ) form a disordered region. Residues 24 to 33 (QDPEAQRQMQ) are compositionally biased toward low complexity.

This sequence belongs to the PDCD5 family.

The sequence is that of DNA-binding protein MmarC6_0793 from Methanococcus maripaludis (strain C6 / ATCC BAA-1332).